The sequence spans 275 residues: Lacto-N-neotetraose biosynthesis glycosyltransferase LgtB (275 aa).

It belongs to the glycosyltransferase 25 family.

Its pathway is glycan metabolism; lacto-N-neotetraose biosynthesis. The protein operates within bacterial outer membrane biogenesis; lipooligosaccharide biosynthesis. Functionally, adds the second galactose to the lacto-N-tetraose chain in lipooligosaccharide (LOS). The chain is Lacto-N-neotetraose biosynthesis glycosyltransferase LgtB (lgtB) from Neisseria meningitidis serogroup B (strain ATCC BAA-335 / MC58).